Consider the following 548-residue polypeptide: CTP synthase (548 aa).

Residues 1–266 (MRVNYIFVTG…DNYICKRFNL (266 aa)) are amidoligase domain. S14 is a binding site for CTP. Residue S14 coordinates UTP. Residues 15–20 (SLGKGI) and D72 each bind ATP. The Mg(2+) site is built by D72 and E140. CTP is bound by residues 147 to 149 (DIE), 187 to 192 (KTKPTQ), and K223. UTP contacts are provided by residues 187 to 192 (KTKPTQ) and K223. One can recognise a Glutamine amidotransferase type-1 domain in the interval 291-543 (TVGMVGKYIE…IKAAIEYQHR (253 aa)). G353 provides a ligand contact to L-glutamine. The active-site Nucleophile; for glutamine hydrolysis is the C380. L-glutamine contacts are provided by residues 381 to 384 (LGMQ), E404, and R471. Catalysis depends on residues H516 and E518.

The protein belongs to the CTP synthase family. As to quaternary structure, homotetramer.

It carries out the reaction UTP + L-glutamine + ATP + H2O = CTP + L-glutamate + ADP + phosphate + 2 H(+). The catalysed reaction is L-glutamine + H2O = L-glutamate + NH4(+). The enzyme catalyses UTP + NH4(+) + ATP = CTP + ADP + phosphate + 2 H(+). Its pathway is pyrimidine metabolism; CTP biosynthesis via de novo pathway; CTP from UDP: step 2/2. With respect to regulation, allosterically activated by GTP, when glutamine is the substrate; GTP has no effect on the reaction when ammonia is the substrate. The allosteric effector GTP functions by stabilizing the protein conformation that binds the tetrahedral intermediate(s) formed during glutamine hydrolysis. Inhibited by the product CTP, via allosteric rather than competitive inhibition. Catalyzes the ATP-dependent amination of UTP to CTP with either L-glutamine or ammonia as the source of nitrogen. Regulates intracellular CTP levels through interactions with the four ribonucleotide triphosphates. This Blochmanniella pennsylvanica (strain BPEN) protein is CTP synthase.